A 316-amino-acid polypeptide reads, in one-letter code: Ribosomal protein L11 methyltransferase (316 aa).

Residues Thr-157, Gly-178, Asp-200, and Asn-243 each coordinate S-adenosyl-L-methionine.

The protein belongs to the methyltransferase superfamily. PrmA family.

The protein resides in the cytoplasm. The catalysed reaction is L-lysyl-[protein] + 3 S-adenosyl-L-methionine = N(6),N(6),N(6)-trimethyl-L-lysyl-[protein] + 3 S-adenosyl-L-homocysteine + 3 H(+). Its function is as follows. Methylates ribosomal protein L11. The sequence is that of Ribosomal protein L11 methyltransferase from Streptococcus pneumoniae serotype 2 (strain D39 / NCTC 7466).